We begin with the raw amino-acid sequence, 90 residues long: MNKAQLVDAIAAKADLSKAQAKVALEEIINGITQSLKEGDAVQLVGFGTFKVNHRAGRTGRNPQTGKEIQIAAANVPSFVAGKALKDAVK.

The protein belongs to the bacterial histone-like protein family. In terms of assembly, heterodimer of an alpha and a beta chain.

Functionally, histone-like DNA-binding protein which is capable of wrapping DNA to stabilize it, and thus to prevent its denaturation under extreme environmental conditions. The polypeptide is DNA-binding protein HU-alpha (hupA) (Aeromonas hydrophila).